A 550-amino-acid chain; its full sequence is Protein UshA (550 aa).

The first 25 residues, 1–25 (MKFLKRGVALALLAAFALTTQPAQA), serve as a signal peptide directing secretion. Residues D41, H43, D84, N116, H217, H252, and Q254 each contribute to the Zn(2+) site. Residues C258 and C275 are joined by a disulfide bond. Residues F429 and 498–504 (FNATGGD) each bind substrate.

Belongs to the 5'-nucleotidase family. As to quaternary structure, monomer. Zn(2+) is required as a cofactor.

Its subcellular location is the periplasm. It catalyses the reaction UDP-sugar + H2O = UMP + alpha-D-aldose 1-phosphate.. The catalysed reaction is a ribonucleoside 5'-phosphate + H2O = a ribonucleoside + phosphate. Degradation of external UDP-glucose to uridine monophosphate and glucose-1-phosphate, which can then be used by the cell. The sequence is that of Protein UshA (ushA) from Salmonella pullorum.